The primary structure comprises 350 residues: Erythronate-4-phosphate dehydrogenase (350 aa).

Residues serine 45 and threonine 66 each contribute to the substrate site. Residues 124–125, aspartate 144, 203–205, and aspartate 226 each bind NAD(+); these read QV and ASR. The active site involves arginine 205. The active site involves glutamate 231. Residue histidine 248 is the Proton donor of the active site. Glycine 251 lines the NAD(+) pocket.

Belongs to the D-isomer specific 2-hydroxyacid dehydrogenase family. PdxB subfamily. Homodimer.

It is found in the cytoplasm. It catalyses the reaction 4-phospho-D-erythronate + NAD(+) = (R)-3-hydroxy-2-oxo-4-phosphooxybutanoate + NADH + H(+). It functions in the pathway cofactor biosynthesis; pyridoxine 5'-phosphate biosynthesis; pyridoxine 5'-phosphate from D-erythrose 4-phosphate: step 2/5. Functionally, catalyzes the oxidation of erythronate-4-phosphate to 3-hydroxy-2-oxo-4-phosphonooxybutanoate. The sequence is that of Erythronate-4-phosphate dehydrogenase from Legionella pneumophila (strain Lens).